Consider the following 738-residue polypeptide: Leucine-rich repeat flightless-interacting protein 1 (738 aa).

Thr2 is modified (N-acetylthreonine). Ser16 is modified (phosphoserine). A compositionally biased stretch (basic and acidic residues) spans 40–65 (IRMKELERQQKEVEERPDKDFAEKGS). Residues 40–98 (IRMKELERQQKEVEERPDKDFAEKGSRNMPSLSAATLASLGGTSSRRGSGDTSISMDTE) are disordered. Residues 78–94 (SLGGTSSRRGSGDTSIS) show a composition bias toward low complexity. Residues Ser83, Ser84, Ser88, and Ser92 each carry the phosphoserine modification. The stretch at 94 to 194 (SMDTEASIRE…LRQREEMLEK (101 aa)) forms a coiled coil. A Glycyl lysine isopeptide (Lys-Gly) (interchain with G-Cter in SUMO1) cross-link involves residue Lys249. 2 stretches are compositionally biased toward basic and acidic residues: residues 253-262 (VEKVGQRETL) and 277-297 (DCVD…RPVE). Positions 253–738 (VEKVGQRETL…SKSKEDCTMS (486 aa)) are disordered. Ser302 is modified (phosphoserine). Over residues 314–326 (EVQSQDQENTSIL) the composition is skewed to polar residues. Residues 330–347 (EQIESHEVTNKSDSRDSN) are compositionally biased toward basic and acidic residues. Phosphoserine is present on residues Ser346 and Ser348. A compositionally biased stretch (polar residues) spans 371–380 (KNQSENSMDS). 2 stretches are compositionally biased toward basic and acidic residues: residues 381–400 (QGKE…RPDH) and 467–476 (SERELAHEAA). Positions 479–580 (EEALTQSSQA…KNKKKKAAAP (102 aa)) are DNA-binding. Composition is skewed to polar residues over residues 483–495 (TQSS…NTVT) and 520–534 (TVQS…PGST). Positions 535–553 (DTKHTSPHAKERNKAKSEQ) are enriched in basic and acidic residues. A phosphoserine mark is found at Ser551 and Ser560. Residues 563–577 (KKTKNKKKKNKKKKA) show a composition bias toward basic residues. Basic and acidic residues predominate over residues 606 to 626 (RVQATDKKWAAETPELKEDPQ). Ser675 and Ser701 each carry phosphoserine. Basic and acidic residues-rich tracts occupy residues 691–703 (QADE…HSVD) and 720–738 (EQAR…CTMS).

The protein belongs to the LRRFIP family. In terms of assembly, homodimer. May also form higher oligomers. Interacts with FLII. Interacts with MYD88. Competes with FLII for MyD88-binding, even in the absence of LPS.

It is found in the nucleus. It localises to the cytoplasm. Functionally, transcriptional repressor which preferentially binds to the GC-rich consensus sequence (5'-AGCCCCCGGCG-3') and may regulate expression of TNF, EGFR and PDGFA. May control smooth muscle cells proliferation following artery injury through PDGFA repression. May also bind double-stranded RNA. Positively regulates Toll-like receptor (TLR) signaling in response to agonist probably by competing with the negative FLII regulator for MYD88-binding. This is Leucine-rich repeat flightless-interacting protein 1 (Lrrfip1) from Rattus norvegicus (Rat).